We begin with the raw amino-acid sequence, 436 residues long: GTPase Der (436 aa).

2 consecutive EngA-type G domains span residues 4 to 167 (PIVA…PDEA) and 175 to 351 (IRFS…DNHR). GTP contacts are provided by residues 10-17 (GRPNVGKS), 57-61 (DTGGI), 119-122 (NKVD), 181-188 (GRPNVGKS), 229-233 (DTAGM), and 294-297 (NKWD). The region spanning 352-436 (KRITSSTLND…PIKLIVRARK (85 aa)) is the KH-like domain.

This sequence belongs to the TRAFAC class TrmE-Era-EngA-EngB-Septin-like GTPase superfamily. EngA (Der) GTPase family. As to quaternary structure, associates with the 50S ribosomal subunit.

GTPase that plays an essential role in the late steps of ribosome biogenesis. The chain is GTPase Der from Leuconostoc mesenteroides subsp. mesenteroides (strain ATCC 8293 / DSM 20343 / BCRC 11652 / CCM 1803 / JCM 6124 / NCDO 523 / NBRC 100496 / NCIMB 8023 / NCTC 12954 / NRRL B-1118 / 37Y).